The sequence spans 170 residues: Ubiquitin-conjugating enzyme E2 2 (170 aa).

A UBC core domain is found at 4–150; that stretch reads PARRRLMRDF…VKETVEKSWE (147 aa). Cys88 acts as the Glycyl thioester intermediate in catalysis. The segment at 148-170 is disordered; the sequence is SWEDDLKDMDDGDDDDDDDDDDD. Residues 152 to 170 show a composition bias toward acidic residues; it reads DLKDMDDGDDDDDDDDDDD.

This sequence belongs to the ubiquitin-conjugating enzyme family.

It is found in the cytoplasm. It localises to the nucleus. It carries out the reaction S-ubiquitinyl-[E1 ubiquitin-activating enzyme]-L-cysteine + [E2 ubiquitin-conjugating enzyme]-L-cysteine = [E1 ubiquitin-activating enzyme]-L-cysteine + S-ubiquitinyl-[E2 ubiquitin-conjugating enzyme]-L-cysteine.. Its pathway is protein modification; protein ubiquitination. Catalyzes the covalent attachment of ubiquitin to other proteins. Plays a role in transcription regulation by catalyzing the monoubiquitination of histone H2B to form H2BK123ub1. H2BK123ub1 gives a specific tag for epigenetic transcriptional activation and is also a prerequisite for H3K4me and H3K79me formation. Also involved in postreplication repair of UV-damaged DNA, in N-end rule-dependent protein degradation and in sporulation. This Eremothecium gossypii (strain ATCC 10895 / CBS 109.51 / FGSC 9923 / NRRL Y-1056) (Yeast) protein is Ubiquitin-conjugating enzyme E2 2 (UBC2).